A 157-amino-acid polypeptide reads, in one-letter code: Transcription elongation factor GreA (157 aa).

The stretch at 14-37 (LREELDRLLKLRPKITEAIAEARE) forms a coiled coil.

It belongs to the GreA/GreB family.

Necessary for efficient RNA polymerase transcription elongation past template-encoded arresting sites. The arresting sites in DNA have the property of trapping a certain fraction of elongating RNA polymerases that pass through, resulting in locked ternary complexes. Cleavage of the nascent transcript by cleavage factors such as GreA or GreB allows the resumption of elongation from the new 3'terminus. GreA releases sequences of 2 to 3 nucleotides. In Vibrio cholerae serotype O1 (strain ATCC 39315 / El Tor Inaba N16961), this protein is Transcription elongation factor GreA.